The following is a 131-amino-acid chain: Profilin-9 (131 aa).

Residues Cys-13 and Cys-115 are joined by a disulfide bond. The Involved in PIP2 interaction motif lies at 81–97 (AVTRGKKGAGGITIKKT). The residue at position 111 (Thr-111) is a Phosphothreonine.

It belongs to the profilin family. In terms of assembly, occurs in many kinds of cells as a complex with monomeric actin in a 1:1 ratio. In terms of processing, phosphorylated by MAP kinases.

The protein resides in the cytoplasm. The protein localises to the cytoskeleton. Its function is as follows. Binds to actin and affects the structure of the cytoskeleton. At high concentrations, profilin prevents the polymerization of actin, whereas it enhances it at low concentrations. The chain is Profilin-9 from Phleum pratense (Common timothy).